The primary structure comprises 520 residues: Interferon lambda receptor 1 (520 aa).

Residues 1-20 (MAGPERWGPLLLCLLQAAPG) form the signal peptide. Over 21–228 (RPRLAPPQNV…LLEVPEANWA (208 aa)) the chain is Extracellular. Residues 26-126 (PPQNVTLLSQ…LDYLFEVEPA (101 aa)) form the Fibronectin type-III domain. N-linked (GlcNAc...) asparagine glycans are attached at residues asparagine 29 and asparagine 36. Intrachain disulfides connect cysteine 74–cysteine 82 and cysteine 86–cysteine 150. N-linked (GlcNAc...) asparagine glycans are attached at residues asparagine 142 and asparagine 169. Cysteine 195 and cysteine 217 are disulfide-bonded. Residues 229–249 (FLVLPSLLILLLVIAAGGVIW) form a helical membrane-spanning segment. The Cytoplasmic portion of the chain corresponds to 250-520 (KTLMGNPWFQ…GRTLGHYMAR (271 aa)). Disordered stretches follow at residues 302 to 439 (VRPT…FLEE) and 477 to 520 (ESSP…YMAR). A compositionally biased stretch (acidic residues) spans 323–336 (AEDEEEEDEEDTED). Positions 380–392 (SSAWDSSDRSWAS) are enriched in low complexity. Positions 479–495 (SPEEEEEARESEIEDSD) are enriched in acidic residues.

It belongs to the type II cytokine receptor family. As to quaternary structure, heterodimer with IL10RB. In terms of processing, ubiquitinated by FBXO45-containing E3 ligase leading to proteasomal degradation. Widely expressed.

Its subcellular location is the membrane. The IFNLR1/IL10RB dimer is a receptor for the cytokine ligands IFNL2 and IFNL3 and mediates their antiviral activity. The ligand/receptor complex stimulate the activation of the JAK/STAT signaling pathway leading to the expression of IFN-stimulated genes (ISG), which contribute to the antiviral state. Determines the cell type specificity of the lambda interferon action. Shows a more restricted pattern of expression in the epithelial tissues thereby limiting responses to lambda interferons primarily to epithelial cells of the respiratory, gastrointestinal, and reproductive tracts. Seems not to be essential for early virus-activated host defense in vaginal infection, but plays an important role in Toll-like receptor (TLR)-induced antiviral defense. Plays a significant role in the antiviral immune defense in the intestinal epithelium. The protein is Interferon lambda receptor 1 (IFNLR1) of Homo sapiens (Human).